The following is a 765-amino-acid chain: 5-methyltetrahydropteroyltriglutamate--homocysteine methyltransferase (765 aa).

Residues 18–21 (REWK) and Lys114 contribute to the 5-methyltetrahydropteroyltri-L-glutamate site. L-homocysteine-binding positions include 437–439 (IGS) and Glu490. Residues 437–439 (IGS) and Glu490 each bind L-methionine. Trp567 provides a ligand contact to 5-methyltetrahydropteroyltri-L-glutamate. Asp605 contributes to the L-homocysteine binding site. Position 605 (Asp605) interacts with L-methionine. Residue Glu611 coordinates 5-methyltetrahydropteroyltri-L-glutamate. Zn(2+) contacts are provided by His647, Cys649, and Glu671. His700 serves as the catalytic Proton donor. Cys732 is a binding site for Zn(2+).

It belongs to the vitamin-B12 independent methionine synthase family. Zn(2+) is required as a cofactor.

It catalyses the reaction 5-methyltetrahydropteroyltri-L-glutamate + L-homocysteine = tetrahydropteroyltri-L-glutamate + L-methionine. Its pathway is amino-acid biosynthesis; L-methionine biosynthesis via de novo pathway; L-methionine from L-homocysteine (MetE route): step 1/1. Its function is as follows. Catalyzes the transfer of a methyl group from 5-methyltetrahydrofolate to homocysteine resulting in methionine formation. This Listeria welshimeri serovar 6b (strain ATCC 35897 / DSM 20650 / CCUG 15529 / CIP 8149 / NCTC 11857 / SLCC 5334 / V8) protein is 5-methyltetrahydropteroyltriglutamate--homocysteine methyltransferase.